The sequence spans 368 residues: Propane 2-monooxygenase, hydroxylase component small subunit (368 aa).

Belongs to the TmoE/XamoE family. In terms of assembly, the propane 2-monooxygenase multicomponent enzyme system is composed of an electron transfer component and a monooxygenase component interacting with the effector protein PrmD. The electron transfer component is composed of a reductase (PrmB), and the monooxygenase component is formed by a large subunit (PrmA) and a small subunit (PrmC). Probably requires the presence of the chaperonin-like protein PrmG to ensure a productive folding, resulting of a soluble PrmC, which leads to the active form of PrmABCD.

The catalysed reaction is propane + NADH + O2 + H(+) = propan-2-ol + NAD(+) + H2O. In terms of biological role, component of the propane 2-monooxygenase multicomponent enzyme system which is involved in the degradation of propane via the O2-dependent hydroxylation of propane. Also able to catalyze the oxidation the water contaminant N-nitrosodimethylamine (NDMA). The sequence is that of Propane 2-monooxygenase, hydroxylase component small subunit from Rhodococcus jostii (strain RHA1).